The chain runs to 404 residues: Caspase-1 (404 aa).

The region spanning 1 to 91 (MADKVLKDKR…HLAQTLGLSS (91 aa)) is the CARD domain. The propeptide occupies 1–119 (MADKVLKDKR…SLPAFVENMP (119 aa)). Catalysis depends on residues His237 and Cys285. The propeptide occupies 298–316 (SPKASTDSWTHQPLMLQSD). At Ser302 the chain carries Phosphoserine.

It belongs to the peptidase C14A family. In terms of assembly, heterotetramer that consists of two anti-parallel arranged heterodimers, each one formed by a 20 kDa (Caspase-1 subunit p20) and a 10 kDa (Caspase-1 subunit p10) subunit. May be a component of the inflammasome, a protein complex which also includes PYCARD, CARD8 and NLRP2 and whose function would be the activation of pro-inflammatory caspases. Component of the AIM2 PANoptosome complex, a multiprotein complex that drives inflammatory cell death (PANoptosis). Both the p10 and p20 subunits interact with MEFV. Interacts with CARD17P/INCA and CARD18. Interacts with SERPINB1; this interaction regulates CASP1 activity. Heterotetramer that consists of two anti-parallel arranged heterodimers, each one formed by a 20 kDa (Caspase-1 subunit p20) and a 10 kDa (Caspase-1 subunit p10) subunit. The two subunits are derived from the precursor sequence by an autocatalytic mechanism. Post-translationally, ubiquitinated via 'Lys-11'-linked polyubiquitination. Deubiquitinated by USP8.

The protein localises to the cytoplasm. It localises to the cell membrane. It catalyses the reaction Strict requirement for an Asp residue at position P1 and has a preferred cleavage sequence of Tyr-Val-Ala-Asp-|-.. Functionally, thiol protease involved in a variety of inflammatory processes by proteolytically cleaving other proteins, such as the precursors of the inflammatory cytokines interleukin-1 beta (IL1B) and interleukin 18 (IL18) as well as the pyroptosis inducer Gasdermin-D (GSDMD), into active mature peptides. Plays a key role in cell immunity as an inflammatory response initiator: once activated through formation of an inflammasome complex, it initiates a pro-inflammatory response through the cleavage of the two inflammatory cytokines IL1B and IL18, releasing the mature cytokines which are involved in a variety of inflammatory processes. Cleaves a tetrapeptide after an Asp residue at position P1. Also initiates pyroptosis, a programmed lytic cell death pathway, through cleavage of GSDMD. In contrast to cleavage of interleukin IL1B, recognition and cleavage of GSDMD is not strictly dependent on the consensus cleavage site but depends on an exosite interface on CASP1 that recognizes and binds the Gasdermin-D, C-terminal (GSDMD-CT) part. Cleaves and activates CASP7 in response to bacterial infection, promoting plasma membrane repair. Upon inflammasome activation, during DNA virus infection but not RNA virus challenge, controls antiviral immunity through the cleavage of CGAS, rendering it inactive. In apoptotic cells, cleaves SPHK2 which is released from cells and remains enzymatically active extracellularly. This Canis lupus familiaris (Dog) protein is Caspase-1 (CASP1).